The primary structure comprises 302 residues: MVTEQEIEAIGKTLVDPKQPLQARFRALFTLRGLGGPDAISWISRGFEDSSALLKHELAYCLGQMRDARAIPVLADVLQDTSQEPMVRHEAGEALGAIGNPEVLGLLKQYSTDPVVEVAETCQLAVGRLEWLQQHPGEATCAGPYLSVDPAPPAAEQDVGRLREALLDEARPLFERYRAMFALRNVGGKEAALALAEGLQCGSALFRHEVGYVLGQLQHEAAVPGLAATLARTTESPMVRHECAEALGAIARPACLAALREHIEDPEQVVRESCEVALDMYEYESSQDFQYADGLERLRPPP.

M1 is modified (N-acetylmethionine). 5 HEAT-like PBS-type repeats span residues 54–80, 87–113, 175–201, 206–232, and 239–265; these read LKHE…VLQD, VRHE…YSTD, ERYR…GLQC, FRHE…TLAR, and VRHE…HIED. Positions 56, 89, and 90 each coordinate Fe cation. Positions 208, 241, and 242 each coordinate Fe cation.

This sequence belongs to the deoxyhypusine hydroxylase family. Requires Fe(2+) as cofactor.

The catalysed reaction is [eIF5A protein]-deoxyhypusine + AH2 + O2 = [eIF5A protein]-hypusine + A + H2O. Its pathway is protein modification; eIF5A hypusination. In terms of biological role, catalyzes the hydroxylation of the N(6)-(4-aminobutyl)-L-lysine intermediate produced by deoxyhypusine synthase/DHPS on a critical lysine of the eukaryotic translation initiation factor 5A/eIF-5A. This is the second step of the post-translational modification of that lysine into an unusual amino acid residue named hypusine. Hypusination is unique to mature eIF-5A factor and is essential for its function. The sequence is that of Deoxyhypusine hydroxylase from Mus musculus (Mouse).